Reading from the N-terminus, the 308-residue chain is Oxygen-dependent coproporphyrinogen-III oxidase (308 aa).

Residue serine 94 participates in substrate binding. Residues histidine 98 and histidine 108 each contribute to the a divalent metal cation site. Residue histidine 108 is the Proton donor of the active site. Position 110 to 112 (110 to 112 (NVR)) interacts with substrate. A divalent metal cation-binding residues include histidine 147 and histidine 177. The interval 242 to 277 (YVEFNLVWDRGTLFGLQTGGRTESILMSMPPLVRWE) is important for dimerization. 260–262 (GGR) contacts substrate.

Belongs to the aerobic coproporphyrinogen-III oxidase family. Homodimer. Requires a divalent metal cation as cofactor.

The protein localises to the cytoplasm. The catalysed reaction is coproporphyrinogen III + O2 + 2 H(+) = protoporphyrinogen IX + 2 CO2 + 2 H2O. The protein operates within porphyrin-containing compound metabolism; protoporphyrin-IX biosynthesis; protoporphyrinogen-IX from coproporphyrinogen-III (O2 route): step 1/1. Involved in the heme biosynthesis. Catalyzes the aerobic oxidative decarboxylation of propionate groups of rings A and B of coproporphyrinogen-III to yield the vinyl groups in protoporphyrinogen-IX. This is Oxygen-dependent coproporphyrinogen-III oxidase from Yersinia enterocolitica serotype O:8 / biotype 1B (strain NCTC 13174 / 8081).